Here is a 355-residue protein sequence, read N- to C-terminus: MLLLQIILLLLPVICSAGDRKPRHYEINLDEPPSQRWNQVIKDHLEYLPGVVEETKKYIPKPLQPFVWWAASKIDRYFTTEIQEELKGIASESGLPIGEIVGMNILYDVAAFDRRHIFGLGCTSIVAQNSAGQIIHGRNLDYDMTELLKNITIHVDFVRNGTIQYSGLTFALYNGVLTGQRPGEYSVSLNARYSGAYIDNILMEFYTKFKRPVSFFIRDVLENQATYTEAVDAFSRTHLFSPSYIIVAGIKKNEGVVISRNRWSAANVYPLNVDANQWFLVETNFDNWKKQGDDRRITAIQKLKELGRRNFDEKSMVEVLSTVPVRNNLTVFSTVMVPGLPDSADYFRQSTWILP.

The signal sequence occupies residues methionine 1–alanine 17. Cysteine 122 acts as the Nucleophile in catalysis. 3 N-linked (GlcNAc...) asparagine glycosylation sites follow: asparagine 150, asparagine 160, and asparagine 328.

Belongs to the acid ceramidase family. Heterodimer of an alpha and a beta subunit, produced by autocatalytic cleavage. In terms of processing, N-glycosylated. Post-translationally, autoproteolytic cleavage at pH 4.5 gives rise to the alpha and beta subunit. Cleavage gives rise to a conformation change that activates the enzyme. The same catalytic Cys residue mediates the autoproteolytic cleavage and subsequent hydrolysis of lipid substrates.

The protein localises to the lysosome. The protein resides in the membrane. The catalysed reaction is N-hexadecanoylethanolamine + H2O = ethanolamine + hexadecanoate. It catalyses the reaction an N-(long-chain fatty acyl)ethanolamine + H2O = a long-chain fatty acid + ethanolamine. It participates in lipid metabolism; fatty acid metabolism. In terms of biological role, degrades bioactive fatty acid amides, such as N-palmitoylethanolamine, to ethanolamine and free fatty acids. This is N-acylethanolamine-hydrolyzing acid amidase from Caenorhabditis elegans.